Reading from the N-terminus, the 236-residue chain is MTKRYWNIDLEEMMRAGVHFGHGTRKWNPRMAPYISAKRKGIHIINLTRTARFLSEACDLVFDAASRGKQFLIVGTKNKAADLVSRAAIRARCHYVNKKWLGGMLTNWSTTEKRLHKFRDLRTEQKTEGLNRLPKRDAAVLKRQFSHLETYLGGIKYMTGLPDIVIIIDQQEEYTALRECITLGIPTISLIDTNCNPDLADISIPANDDAIASIRFILNKLVFAICEGRSSYIQNS.

Belongs to the universal ribosomal protein uS2 family.

The protein localises to the plastid. It localises to the chloroplast. This chain is Small ribosomal subunit protein uS2c (rps2), found in Aethionema grandiflorum (Persian stone-cress).